An 887-amino-acid polypeptide reads, in one-letter code: 3-hydroxy-3-methylglutaryl-coenzyme A reductase (887 aa).

Over 1-9 (MLSRLFRMH) the chain is Cytoplasmic. A helical membrane pass occupies residues 10–39 (GLFVASHPWEVIVGTVTLTICMMSMNMFTG). The Lumenal segment spans residues 40–56 (NNKICGWNYECPKFEED). Residues 57 to 78 (VLSSDIIILTITRCIAILYIYF) traverse the membrane as a helical segment. The 158-residue stretch at 61–218 (DIIILTITRC…MTFFPACVSL (158 aa)) folds into the SSD domain. The INSIG-binding motif signature appears at 75-78 (YIYF). Residues 79-89 (QFQNLRQLGSK) lie on the Cytoplasmic side of the membrane. A Glycyl lysine isopeptide (Lys-Gly) (interchain with G-Cter in ubiquitin) cross-link involves residue Lys-89. A helical transmembrane segment spans residues 90–114 (YILGIAGLFTIFSSFVFSTVVIHFL). At 115 to 123 (DKELTGLNE) the chain is on the lumenal side. A helical membrane pass occupies residues 124–149 (ALPFFLLLIDLSRASALAKFALSSNS). Over 150-159 (QDEVRENIAR) the chain is Cytoplasmic. Residues 160 to 187 (GMAILGPTFTLDALVECLVIGVGTMSGV) traverse the membrane as a helical segment. At 188-191 (RQLE) the chain is on the lumenal side. The chain crosses the membrane as a helical span at residues 192-220 (IMCCFGCMSVLANYFVFMTFFPACVSLVL). Over 221-248 (ELSRESREGRPIWQLSHFARVLEEEENK) the chain is Cytoplasmic. A Glycyl lysine isopeptide (Lys-Gly) (interchain with G-Cter in ubiquitin) cross-link involves residue Lys-248. Residues 249-275 (PNPVTQRVKMIMSLGLVLVHAHSRWIA) traverse the membrane as a helical segment. The Lumenal segment spans residues 276–314 (DPSPQNSTAEQAKVSLGLDEDVSKRIEPSVSLWQFYLSK). A glycan (N-linked (GlcNAc...) asparagine) is linked at Asn-281. The helical transmembrane segment at 315–339 (MISMDIEQVITLSLAFLLAVKYIFF) threads the bilayer. Residues 340 to 887 (EQAETESTLS…LQGTCTKKAA (548 aa)) lie on the Cytoplasmic side of the membrane. Residues Glu-558, Lys-690, and Asp-766 each act as charge relay system in the active site. The active-site Proton donor is the His-865. At Ser-871 the chain carries Phosphoserine.

Belongs to the HMG-CoA reductase family. In terms of assembly, homotetramer. Homodimer. Interacts (via its SSD) with INSIG1; the interaction, accelerated by sterols, leads to the recruitment of HMGCR to AMFR/gp78 for its ubiquitination by the sterol-mediated ERAD pathway. Interacts with UBIAD1. Undergoes sterol-mediated ubiquitination and ER-associated degradation (ERAD). Accumulation of sterols in the endoplasmic reticulum (ER) membrane, triggers binding of the reductase to the ER membrane protein INSIG1 or INSIG2. The INSIG1 binding leads to the recruitment of the ubiquitin ligase, AMFR/gp78, RNF139 or RNF145, initiating ubiquitination of the reductase. The ubiquitinated reductase is then extracted from the ER membrane and delivered to cytosolic 26S proteosomes by a mechanism probably mediated by the ATPase Valosin-containing protein VCP/p97. The INSIG2-binding leads to the recruitment of the ubiquitin ligase RNF139, initiating ubiquitination of the reductase. Lys-248 is the main site of ubiquitination. Ubiquitination is enhanced by the presence of a geranylgeranylated protein. Post-translationally, N-glycosylated. Deglycosylated by NGLY1 on release from the endoplasmic reticulum (ER) in a sterol-mediated manner. In terms of processing, phosphorylated. Phosphorylation at Ser-871 reduces the catalytic activity.

It localises to the endoplasmic reticulum membrane. The protein localises to the peroxisome membrane. It carries out the reaction (R)-mevalonate + 2 NADP(+) + CoA = (3S)-3-hydroxy-3-methylglutaryl-CoA + 2 NADPH + 2 H(+). Its pathway is metabolic intermediate biosynthesis; (R)-mevalonate biosynthesis; (R)-mevalonate from acetyl-CoA: step 3/3. Its activity is regulated as follows. Regulated by a negative feedback mechanism through sterols and non-sterol metabolites derived from mevalonate. Phosphorylation at Ser-871 down-regulates the catalytic activity. Functionally, catalyzes the conversion of (3S)-hydroxy-3-methylglutaryl-CoA (HMG-CoA) to mevalonic acid, the rate-limiting step in the synthesis of cholesterol and other isoprenoids, thus plays a critical role in cellular cholesterol homeostasis. This Mus musculus (Mouse) protein is 3-hydroxy-3-methylglutaryl-coenzyme A reductase (Hmgcr).